Here is a 154-residue protein sequence, read N- to C-terminus: D-aminoacyl-tRNA deacylase (154 aa).

Positions 142–143 (GP) match the Gly-cisPro motif, important for rejection of L-amino acids motif.

This sequence belongs to the DTD family. Homodimer.

Its subcellular location is the cytoplasm. It catalyses the reaction glycyl-tRNA(Ala) + H2O = tRNA(Ala) + glycine + H(+). The enzyme catalyses a D-aminoacyl-tRNA + H2O = a tRNA + a D-alpha-amino acid + H(+). An aminoacyl-tRNA editing enzyme that deacylates mischarged D-aminoacyl-tRNAs. Also deacylates mischarged glycyl-tRNA(Ala), protecting cells against glycine mischarging by AlaRS. Acts via tRNA-based rather than protein-based catalysis; rejects L-amino acids rather than detecting D-amino acids in the active site. By recycling D-aminoacyl-tRNA to D-amino acids and free tRNA molecules, this enzyme counteracts the toxicity associated with the formation of D-aminoacyl-tRNA entities in vivo and helps enforce protein L-homochirality. The sequence is that of D-aminoacyl-tRNA deacylase (DTD1) from Yarrowia lipolytica (strain CLIB 122 / E 150) (Yeast).